The sequence spans 179 residues: UPF0316 protein Ping_1367 (179 aa).

2 helical membrane passes run 28-48 and 55-75; these read FLAS…SAQV and WYLA…GISI.

Belongs to the UPF0316 family.

It localises to the cell membrane. The sequence is that of UPF0316 protein Ping_1367 from Psychromonas ingrahamii (strain DSM 17664 / CCUG 51855 / 37).